The following is a 71-amino-acid chain: Light-harvesting protein B-800/850 alpha chain (71 aa).

Residues 1-15 (MNQGKVWRVVKPTVG) lie on the Cytoplasmic side of the membrane. Residues 16–36 (VPVYLGAVAVTALILHGGLLA) form a helical membrane-spanning segment. Histidine 31 contributes to the a bacteriochlorophyll binding site. The Periplasmic segment spans residues 37–50 (KTDWFGAYWNGGKK). Residues 51 to 71 (AAAAAAAVAPAPVAAPQAPAQ) form a helical membrane-spanning segment.

It belongs to the antenna complex alpha subunit family. An alpha/beta heterodimer conjugated to 3 bacteriochlorophyll molecules. The core complex is formed by different alpha and beta chains, binding bacteriochlorophyll molecules, and arranged most probably in tetrameric structures disposed around the reaction center. The non-pigmented gamma chains may constitute additional components.

Its subcellular location is the cell membrane. Functionally, antenna complexes are light-harvesting systems, which transfer the excitation energy to the reaction centers. The chain is Light-harvesting protein B-800/850 alpha chain (pucA) from Rubrivivax gelatinosus (Rhodocyclus gelatinosus).